The following is a 114-amino-acid chain: Large ribosomal subunit protein bL19 (114 aa).

The protein belongs to the bacterial ribosomal protein bL19 family.

This protein is located at the 30S-50S ribosomal subunit interface and may play a role in the structure and function of the aminoacyl-tRNA binding site. This Bacillus cereus (strain AH187) protein is Large ribosomal subunit protein bL19.